Here is a 124-residue protein sequence, read N- to C-terminus: Peptidyl-tRNA hydrolase (124 aa).

This sequence belongs to the PTH2 family.

Its subcellular location is the cytoplasm. It catalyses the reaction an N-acyl-L-alpha-aminoacyl-tRNA + H2O = an N-acyl-L-amino acid + a tRNA + H(+). Its function is as follows. The natural substrate for this enzyme may be peptidyl-tRNAs which drop off the ribosome during protein synthesis. This is Peptidyl-tRNA hydrolase from Aeropyrum pernix (strain ATCC 700893 / DSM 11879 / JCM 9820 / NBRC 100138 / K1).